The following is a 607-amino-acid chain: Glutamyl-tRNA(Gln) amidotransferase subunit E (607 aa).

The tract at residues 399-428 (GVPEETRGANPDGTTRFLRPRPGAARMYPE) is disordered.

It belongs to the GatB/GatE family. GatE subfamily. In terms of assembly, heterodimer of GatD and GatE.

It carries out the reaction L-glutamyl-tRNA(Gln) + L-glutamine + ATP + H2O = L-glutaminyl-tRNA(Gln) + L-glutamate + ADP + phosphate + H(+). Its function is as follows. Allows the formation of correctly charged Gln-tRNA(Gln) through the transamidation of misacylated Glu-tRNA(Gln) in organisms which lack glutaminyl-tRNA synthetase. The reaction takes place in the presence of glutamine and ATP through an activated gamma-phospho-Glu-tRNA(Gln). The GatDE system is specific for glutamate and does not act on aspartate. The polypeptide is Glutamyl-tRNA(Gln) amidotransferase subunit E (Pyrobaculum neutrophilum (strain DSM 2338 / JCM 9278 / NBRC 100436 / V24Sta) (Thermoproteus neutrophilus)).